The primary structure comprises 158 residues: Transcription elongation factor GreA (158 aa).

Residues 47-75 adopt a coiled-coil conformation; the sequence is ENSEYDAAKDEQAFVEQRITQVEKMIRNA.

The protein belongs to the GreA/GreB family.

Functionally, necessary for efficient RNA polymerase transcription elongation past template-encoded arresting sites. The arresting sites in DNA have the property of trapping a certain fraction of elongating RNA polymerases that pass through, resulting in locked ternary complexes. Cleavage of the nascent transcript by cleavage factors such as GreA or GreB allows the resumption of elongation from the new 3'terminus. GreA releases sequences of 2 to 3 nucleotides. The polypeptide is Transcription elongation factor GreA (Oceanobacillus iheyensis (strain DSM 14371 / CIP 107618 / JCM 11309 / KCTC 3954 / HTE831)).